Consider the following 421-residue polypeptide: ATP-dependent RNA helicase RhlB (421 aa).

The Q motif signature appears at 9-37; the sequence is QKFSDFALHPKVVEALEKKGFHNCTPIQA. Residues 40-219 form the Helicase ATP-binding domain; the sequence is LPLTLAGRDV…FEQMNNAEYI (180 aa). 53-60 is an ATP binding site; sequence AQTGTGKT. Residues 165 to 168 carry the DEAD box motif; the sequence is DEAD. The 146-residue stretch at 245–390 folds into the Helicase C-terminal domain; that stretch reads RLLQTLIEEE…VSKYNPDALM (146 aa). Positions 392 to 421 are disordered; sequence DLPKPLRLTRPRTGNGPRRTGAPRNRRRSG. Residues 402-414 show a composition bias toward low complexity; the sequence is PRTGNGPRRTGAP.

It belongs to the DEAD box helicase family. RhlB subfamily. As to quaternary structure, component of the RNA degradosome, which is a multiprotein complex involved in RNA processing and mRNA degradation.

The protein localises to the cytoplasm. It carries out the reaction ATP + H2O = ADP + phosphate + H(+). Functionally, DEAD-box RNA helicase involved in RNA degradation. Has RNA-dependent ATPase activity and unwinds double-stranded RNA. This chain is ATP-dependent RNA helicase RhlB, found in Escherichia fergusonii (strain ATCC 35469 / DSM 13698 / CCUG 18766 / IAM 14443 / JCM 21226 / LMG 7866 / NBRC 102419 / NCTC 12128 / CDC 0568-73).